We begin with the raw amino-acid sequence, 200 residues long: Recombination protein RecR (200 aa).

Residues 60–75 (CVYCQALTEDDVCNIC) form a C4-type zinc finger. Residues 83 to 177 (TKLCIIESML…KISRIGFGVP (95 aa)) form the Toprim domain.

Belongs to the RecR family.

May play a role in DNA repair. It seems to be involved in an RecBC-independent recombinational process of DNA repair. It may act with RecF and RecO. This Francisella tularensis subsp. tularensis (strain SCHU S4 / Schu 4) protein is Recombination protein RecR.